An 83-amino-acid polypeptide reads, in one-letter code: Ardiscretin (83 aa).

The first 20 residues, M1–S20, serve as a signal peptide directing secretion. The region spanning K21–G82 is the LCN-type CS-alpha/beta domain. 4 cysteine pairs are disulfide-bonded: C31-C81, C35-C57, C43-C62, and C47-C64. C81 carries the cysteine amide modification.

As to expression, expressed by the venom gland.

The protein localises to the secreted. In terms of biological role, inhibits the sodium (Nav) currents in an apparent irreversible manner. Produces small depolarization and induces repetitive firing in squid axons. Is specific for arthropods (crickets, triatomides, crabs and squids), but is non-toxic to mice. Shows antibacterial activity against both Gram-positive and Gram-negative bacteria. This Tityus discrepans (Venezuelan scorpion) protein is Ardiscretin.